The chain runs to 122 residues: MRHYEIVFMVHPDQSEQVAGMIERYTGSITEAGGKIHRLEDWGRRQLAYPINKLHKAHYVLMNVEADQAVVDELETAFRFNDAVLRNMIMRTKAAITEPSIMLKAREERVKRDEMKFDADVE.

Belongs to the bacterial ribosomal protein bS6 family.

In terms of biological role, binds together with bS18 to 16S ribosomal RNA. In Vibrio cholerae serotype O1 (strain ATCC 39541 / Classical Ogawa 395 / O395), this protein is Small ribosomal subunit protein bS6.